We begin with the raw amino-acid sequence, 262 residues long: Putative hydro-lyase Sca_2211 (262 aa).

The protein belongs to the D-glutamate cyclase family.

This chain is Putative hydro-lyase Sca_2211, found in Staphylococcus carnosus (strain TM300).